A 141-amino-acid polypeptide reads, in one-letter code: MAKKVVAVIKLAITAGKANPSPPIGPALGQHGVNIMAFCKEYNAKTADQAGTVVPVEISVYEDRSFTFVLKTPPAAVLIKKAAGVESGSSEPNRTKVGSITQAQLQEIAQTKMPDLNANNIEAAMKIVAGTARNMGITISD.

The protein belongs to the universal ribosomal protein uL11 family. As to quaternary structure, part of the ribosomal stalk of the 50S ribosomal subunit. Interacts with L10 and the large rRNA to form the base of the stalk. L10 forms an elongated spine to which L12 dimers bind in a sequential fashion forming a multimeric L10(L12)X complex. In terms of processing, one or more lysine residues are methylated.

Functionally, forms part of the ribosomal stalk which helps the ribosome interact with GTP-bound translation factors. This chain is Large ribosomal subunit protein uL11, found in Trichodesmium erythraeum (strain IMS101).